The chain runs to 560 residues: Dihydroxy-acid dehydratase (560 aa).

A [2Fe-2S] cluster-binding site is contributed by C50. D82 contacts Mg(2+). Residue C123 coordinates [2Fe-2S] cluster. 2 residues coordinate Mg(2+): D124 and K125. An N6-carboxylysine modification is found at K125. C195 provides a ligand contact to [2Fe-2S] cluster. E446 is a binding site for Mg(2+). S472 (proton acceptor) is an active-site residue.

Belongs to the IlvD/Edd family. As to quaternary structure, homodimer. The cofactor is [2Fe-2S] cluster. Mg(2+) serves as cofactor.

The catalysed reaction is (2R)-2,3-dihydroxy-3-methylbutanoate = 3-methyl-2-oxobutanoate + H2O. It catalyses the reaction (2R,3R)-2,3-dihydroxy-3-methylpentanoate = (S)-3-methyl-2-oxopentanoate + H2O. It functions in the pathway amino-acid biosynthesis; L-isoleucine biosynthesis; L-isoleucine from 2-oxobutanoate: step 3/4. It participates in amino-acid biosynthesis; L-valine biosynthesis; L-valine from pyruvate: step 3/4. In terms of biological role, functions in the biosynthesis of branched-chain amino acids. Catalyzes the dehydration of (2R,3R)-2,3-dihydroxy-3-methylpentanoate (2,3-dihydroxy-3-methylvalerate) into 2-oxo-3-methylpentanoate (2-oxo-3-methylvalerate) and of (2R)-2,3-dihydroxy-3-methylbutanoate (2,3-dihydroxyisovalerate) into 2-oxo-3-methylbutanoate (2-oxoisovalerate), the penultimate precursor to L-isoleucine and L-valine, respectively. The polypeptide is Dihydroxy-acid dehydratase (Leptothrix cholodnii (strain ATCC 51168 / LMG 8142 / SP-6) (Leptothrix discophora (strain SP-6))).